A 510-amino-acid chain; its full sequence is 2,3-bisphosphoglycerate-independent phosphoglycerate mutase (510 aa).

Positions 16 and 66 each coordinate Mn(2+). The Phosphoserine intermediate role is filled by Ser66. Residues His127, 156–157 (RD), Arg186, Arg192, 257–260 (RADR), and Lys333 each bind substrate. 5 residues coordinate Mn(2+): Asp400, His404, Asp441, His442, and His460.

The protein belongs to the BPG-independent phosphoglycerate mutase family. As to quaternary structure, monomer. It depends on Mn(2+) as a cofactor.

It catalyses the reaction (2R)-2-phosphoglycerate = (2R)-3-phosphoglycerate. It functions in the pathway carbohydrate degradation; glycolysis; pyruvate from D-glyceraldehyde 3-phosphate: step 3/5. Functionally, catalyzes the interconversion of 2-phosphoglycerate and 3-phosphoglycerate. The chain is 2,3-bisphosphoglycerate-independent phosphoglycerate mutase from Gluconobacter oxydans (strain 621H) (Gluconobacter suboxydans).